Reading from the N-terminus, the 203-residue chain is Chaperonin-like RbcX protein 2, chloroplastic (203 aa).

A chloroplast-targeting transit peptide spans 1–78; sequence MVSAWFVVGS…RKSKKLLIVN (78 aa).

Belongs to the RbcX family. Homodimer. Interacts with rbcL, atpB and RBCS-1B.

It localises to the plastid. It is found in the chloroplast stroma. Functionally, chaperone involved in RuBisCO assembly process. The polypeptide is Chaperonin-like RbcX protein 2, chloroplastic (Arabidopsis thaliana (Mouse-ear cress)).